Consider the following 321-residue polypeptide: Tetraacyldisaccharide 4'-kinase (321 aa).

Ser-54 to Thr-61 serves as a coordination point for ATP.

The protein belongs to the LpxK family.

The catalysed reaction is a lipid A disaccharide + ATP = a lipid IVA + ADP + H(+). It functions in the pathway glycolipid biosynthesis; lipid IV(A) biosynthesis; lipid IV(A) from (3R)-3-hydroxytetradecanoyl-[acyl-carrier-protein] and UDP-N-acetyl-alpha-D-glucosamine: step 6/6. In terms of biological role, transfers the gamma-phosphate of ATP to the 4'-position of a tetraacyldisaccharide 1-phosphate intermediate (termed DS-1-P) to form tetraacyldisaccharide 1,4'-bis-phosphate (lipid IVA). The sequence is that of Tetraacyldisaccharide 4'-kinase from Rickettsia peacockii (strain Rustic).